Here is a 321-residue protein sequence, read N- to C-terminus: Calcium-regulated beta-propeller protein CarP (321 aa).

A signal peptide spans 1-42; the sequence is MTIHAQTPEPFSMSRAFTPRRLLLAVLLVALSALVLLGQSFR.

This sequence belongs to the YjiK family.

Its subcellular location is the cell inner membrane. Functionally, plays a role in intracellular Ca(2+) homeostasis. Involved in modulating Ca(2+)-induced swarming motility and pyocyanine production. Plays a role in regulating virulence in a Ca(2+)-dependent manner. Involved in cell protection against oxidative stress in the presence of elevated Ca(2+). The sequence is that of Calcium-regulated beta-propeller protein CarP from Pseudomonas aeruginosa (strain ATCC 15692 / DSM 22644 / CIP 104116 / JCM 14847 / LMG 12228 / 1C / PRS 101 / PAO1).